The sequence spans 879 residues: Phosphoenolpyruvate carboxylase (879 aa).

Residues histidine 138 and lysine 545 contribute to the active site.

It belongs to the PEPCase type 1 family. Requires Mg(2+) as cofactor.

It carries out the reaction oxaloacetate + phosphate = phosphoenolpyruvate + hydrogencarbonate. Functionally, forms oxaloacetate, a four-carbon dicarboxylic acid source for the tricarboxylic acid cycle. The polypeptide is Phosphoenolpyruvate carboxylase (Haemophilus influenzae (strain 86-028NP)).